Here is a 48-residue protein sequence, read N- to C-terminus: U1-theraphotoxin-Agm1a (48 aa).

3 disulfide bridges follow: Cys-4/Cys-34, Cys-8/Cys-40, and Cys-22/Cys-45. Position 44 is a methionine sulfoxide; partial (Met-44).

This sequence belongs to the neurotoxin 12 (Hwtx-2) family. 01 (Ap1a) subfamily. In terms of tissue distribution, expressed by the venom gland.

It is found in the secreted. Is toxic to both insects and mammals. Induces reversible paralysis when injected into S.frugiperda larvae. Reduces both the amplitude and frequency of responses from muscle (GF-TTM and GF-DLM) pathways in the D.melanogaster giant fiber circuit, suggesting an action at the neuromuscular junction, which is mediated by glutamatergic receptors. In mice, intracranial injection of 30 ug causes increased urination, myoclonus, hypermotility with circular movements followed by respiratory and generalized seizures resulting in death within 25-35 minutes of injection. The polypeptide is U1-theraphotoxin-Agm1a (Acanthoscurria gomesiana (Tarantula spider)).